Here is a 154-residue protein sequence, read N- to C-terminus: Ribonuclease H (154 aa).

An RNase H type-1 domain is found at Met1–Ser142. The Mg(2+) site is built by Asp10, Glu48, Asp70, and Asp134. Positions Gly126–Ala147 are enriched in basic and acidic residues. The segment at Gly126–Pro154 is disordered.

It belongs to the RNase H family. Monomer. The cofactor is Mg(2+).

It is found in the cytoplasm. The catalysed reaction is Endonucleolytic cleavage to 5'-phosphomonoester.. Endonuclease that specifically degrades the RNA of RNA-DNA hybrids. This chain is Ribonuclease H, found in Aeromonas salmonicida (strain A449).